The following is a 517-amino-acid chain: Crotonobetaine/carnitine--CoA ligase (517 aa).

This sequence belongs to the ATP-dependent AMP-binding enzyme family.

It catalyses the reaction 4-(trimethylamino)butanoate + ATP + CoA = 4-(trimethylamino)butanoyl-CoA + AMP + diphosphate. The catalysed reaction is crotonobetaine + ATP + CoA = crotonobetainyl-CoA + AMP + diphosphate. It carries out the reaction (R)-carnitine + ATP + CoA = (R)-carnitinyl-CoA + AMP + diphosphate. It functions in the pathway amine and polyamine metabolism; carnitine metabolism. Functionally, catalyzes the transfer of CoA to carnitine, generating the initial carnitinyl-CoA needed for the CaiB reaction cycle. Also has activity toward crotonobetaine and gamma-butyrobetaine. The protein is Crotonobetaine/carnitine--CoA ligase of Salmonella agona (strain SL483).